The primary structure comprises 93 residues: Pancreatic polypeptide prohormone (93 aa).

Positions M1–G29 are cleaved as a signal peptide. The residue at position 65 (Y65) is a Tyrosine amide. The propeptide occupies E89 to E93.

The protein belongs to the NPY family.

The protein localises to the secreted. In terms of biological role, hormone secreted by pancreatic cells that acts as a regulator of pancreatic and gastrointestinal functions probably by signaling through the G protein-coupled receptor NPY4R2. In Canis lupus familiaris (Dog), this protein is Pancreatic polypeptide prohormone (PPY).